The sequence spans 285 residues: Heme oxygenase 3, chloroplastic (285 aa).

The N-terminal 58 residues, 1-58 (MATTRLNPSCHFPASTRLSCESYLGLRTTGRISYARTLTAPRGYLAVKANGGQASVVT), are a transit peptide targeting the chloroplast. H89 contacts heme b. A compositionally biased stretch (basic and acidic residues) spans 89–105 (HTKDQAREGEKESRSPE). Residues 89 to 109 (HTKDQAREGEKESRSPEEGPV) form a disordered region.

This sequence belongs to the heme oxygenase family. In terms of tissue distribution, widely expressed at low levels.

It is found in the plastid. Its subcellular location is the chloroplast. The enzyme catalyses heme b + 3 reduced [NADPH--hemoprotein reductase] + 3 O2 = biliverdin IXalpha + CO + Fe(2+) + 3 oxidized [NADPH--hemoprotein reductase] + 3 H2O + H(+). Its function is as follows. Catalyzes the opening of the heme ring to form the open-chain tetrapyrrole biliverdin IX with the release of iron and carbon monoxide (CO). Produces specifically the biliverdin IX-alpha isomer. Plays a minor role in phytochrome assembly and photomorphogenesis. The protein is Heme oxygenase 3, chloroplastic (HO3) of Arabidopsis thaliana (Mouse-ear cress).